The sequence spans 931 residues: Isoleucine--tRNA ligase (931 aa).

The 'HIGH' region motif lies at 58–68; the sequence is PYANGHLHCGH. E559 is a binding site for L-isoleucyl-5'-AMP. The 'KMSKS' region motif lies at 600 to 604; the sequence is KLSKS. An ATP-binding site is contributed by K603. C894, C897, C914, and C917 together coordinate Zn(2+).

It belongs to the class-I aminoacyl-tRNA synthetase family. IleS type 1 subfamily. In terms of assembly, monomer. The cofactor is Zn(2+).

It is found in the cytoplasm. It catalyses the reaction tRNA(Ile) + L-isoleucine + ATP = L-isoleucyl-tRNA(Ile) + AMP + diphosphate. Its function is as follows. Catalyzes the attachment of isoleucine to tRNA(Ile). As IleRS can inadvertently accommodate and process structurally similar amino acids such as valine, to avoid such errors it has two additional distinct tRNA(Ile)-dependent editing activities. One activity is designated as 'pretransfer' editing and involves the hydrolysis of activated Val-AMP. The other activity is designated 'posttransfer' editing and involves deacylation of mischarged Val-tRNA(Ile). This is Isoleucine--tRNA ligase from Legionella pneumophila (strain Lens).